An 882-amino-acid polypeptide reads, in one-letter code: Alanine--tRNA ligase (882 aa).

Zn(2+)-binding residues include H570, H574, C672, and H676.

Belongs to the class-II aminoacyl-tRNA synthetase family. Zn(2+) serves as cofactor.

Its subcellular location is the cytoplasm. The catalysed reaction is tRNA(Ala) + L-alanine + ATP = L-alanyl-tRNA(Ala) + AMP + diphosphate. Functionally, catalyzes the attachment of alanine to tRNA(Ala) in a two-step reaction: alanine is first activated by ATP to form Ala-AMP and then transferred to the acceptor end of tRNA(Ala). Also edits incorrectly charged Ser-tRNA(Ala) and Gly-tRNA(Ala) via its editing domain. The protein is Alanine--tRNA ligase of Xanthomonas oryzae pv. oryzae (strain MAFF 311018).